A 197-amino-acid chain; its full sequence is Putative AgrB-like protein (197 aa).

A run of 4 helical transmembrane segments spans residues 29–49 (FGFT…AVGL), 79–99 (SIGC…VPFA), 102–122 (YAWI…APYY), and 143–163 (ILIV…LVLG).

It belongs to the AgrB family.

Its subcellular location is the cell membrane. May be involved in the proteolytic processing of a quorum sensing system signal molecule precursor. This is Putative AgrB-like protein from Halalkalibacterium halodurans (strain ATCC BAA-125 / DSM 18197 / FERM 7344 / JCM 9153 / C-125) (Bacillus halodurans).